The sequence spans 499 residues: MATRLLRTNFIRRSYRLPAFSPVGPPTVTASTAVVPEILSFGQQAPEPPLHHPKPTEQSHDGLDLSDQARLFSSIPTSDLLRSTAVLHAAAIGPMVDLGTWVMSSKLMDASVTRGMVLGLVKSTFYDHFCAGEDADAAAERVRSVYEATGLKGMLVYGVEHADDAVSCDDNMQQFIRTIEAAKSLPTSHFSSVVVKITAICPISLLKRVSDLLRWEYKSPNFKLSWKLKSFPVFSESSPLYHTNSEPEPLTAEEERELEAAHGRIQEICRKCQESNVPLLIDAEDTILQPAIDYMAYSSAIMFNADKDRPIVYNTIQAYLRDAGERLHLAVQNAEKENVPMGFKLVRGAYMSSEASLADSLGCKSPVHDTIQDTHSCYNDCMTFLMEKASNGSGFGVVLATHNADSGRLASRKASDLGIDKQNGKIEFAQLYGMSDALSFGLKRAGFNVSKYMPFGPVATAIPYLLRRAYENRGMMATGAHDRQLMRMELKRRLIAGIA.

A mitochondrion-targeting transit peptide spans 1-72 (MATRLLRTNF…LDLSDQARLF (72 aa)).

It belongs to the proline oxidase family. The cofactor is FAD. As to expression, ubiquitous. Highest expression in pollen grains, in the stigma and in developing embryos.

The protein localises to the mitochondrion. The catalysed reaction is L-proline + a quinone = (S)-1-pyrroline-5-carboxylate + a quinol + H(+). The protein operates within amino-acid degradation; L-proline degradation into L-glutamate; L-glutamate from L-proline: step 1/2. Converts proline to delta-1-pyrroline-5-carboxylate. This chain is Proline dehydrogenase 1, mitochondrial (POX1), found in Arabidopsis thaliana (Mouse-ear cress).